We begin with the raw amino-acid sequence, 259 residues long: Bisphosphoglycerate mutase (259 aa).

Position 2 is an N-acetylserine (serine 2). Substrate is bound by residues arginine 10–asparagine 17, cysteine 23–serine 24, arginine 62, glutamate 89–tyrosine 92, arginine 100, and arginine 116–arginine 117. Histidine 11 serves as the catalytic Tele-phosphohistidine intermediate. Residue glutamate 89 is the Proton donor/acceptor of the active site. Threonine 122 carries the post-translational modification Phosphothreonine. Residue glycine 189–asparagine 190 participates in substrate binding.

The protein belongs to the phosphoglycerate mutase family. BPG-dependent PGAM subfamily. In terms of assembly, homodimer.

The enzyme catalyses (2R)-3-phospho-glyceroyl phosphate = (2R)-2,3-bisphosphoglycerate + H(+). It carries out the reaction (2R)-2-phosphoglycerate = (2R)-3-phosphoglycerate. With respect to regulation, at alkaline pH BPGM favors the synthase reaction; however, at lower pH the phosphatase reaction is dominant. Inhibited by citrate. Plays a major role in regulating hemoglobin oxygen affinity by controlling the levels of its allosteric effector 2,3-bisphosphoglycerate (2,3-BPG). Also exhibits mutase (EC 5.4.2.11) activity. This chain is Bisphosphoglycerate mutase (BPGM), found in Bos taurus (Bovine).